Here is a 467-residue protein sequence, read N- to C-terminus: tRNA-2-methylthio-N(6)-dimethylallyladenosine synthase (467 aa).

One can recognise an MTTase N-terminal domain in the interval proline 2 to lysine 118. Residues cysteine 11, cysteine 47, cysteine 81, cysteine 159, cysteine 163, and cysteine 166 each contribute to the [4Fe-4S] cluster site. The region spanning threonine 145–glutamate 379 is the Radical SAM core domain. In terms of domain architecture, TRAM spans glutamine 382 to isoleucine 445.

The protein belongs to the methylthiotransferase family. MiaB subfamily. As to quaternary structure, monomer. The cofactor is [4Fe-4S] cluster.

It localises to the cytoplasm. The enzyme catalyses N(6)-dimethylallyladenosine(37) in tRNA + (sulfur carrier)-SH + AH2 + 2 S-adenosyl-L-methionine = 2-methylsulfanyl-N(6)-dimethylallyladenosine(37) in tRNA + (sulfur carrier)-H + 5'-deoxyadenosine + L-methionine + A + S-adenosyl-L-homocysteine + 2 H(+). Functionally, catalyzes the methylthiolation of N6-(dimethylallyl)adenosine (i(6)A), leading to the formation of 2-methylthio-N6-(dimethylallyl)adenosine (ms(2)i(6)A) at position 37 in tRNAs that read codons beginning with uridine. The protein is tRNA-2-methylthio-N(6)-dimethylallyladenosine synthase of Methylacidiphilum infernorum (isolate V4) (Methylokorus infernorum (strain V4)).